A 476-amino-acid chain; its full sequence is Probable cytosolic Fe-S cluster assembly factor GF22738 (476 aa).

[4Fe-4S] cluster-binding residues include cysteine 23, cysteine 68, cysteine 71, cysteine 74, cysteine 187, cysteine 243, cysteine 395, and cysteine 399.

It belongs to the NARF family.

Component of the cytosolic iron-sulfur (Fe/S) protein assembly machinery. Required for maturation of extramitochondrial Fe/S proteins. This is Probable cytosolic Fe-S cluster assembly factor GF22738 from Drosophila ananassae (Fruit fly).